The following is a 192-amino-acid chain: Adenylate kinase (192 aa).

Residue 12–17 (GSGKTT) participates in ATP binding. Residues 34–63 (STGDLLRAEVASGSELGKTIDSFISKGNLV) are NMP. AMP contacts are provided by residues Thr35, Arg40, 61–63 (NLV), 88–91 (GYPR), and Gln95. Residues 130 to 136 (GRNRGTD) form an LID region. Arg131 contacts ATP. AMP is bound by residues Arg133 and Arg145. Arg173 provides a ligand contact to ATP.

It belongs to the adenylate kinase family. Monomer.

Its subcellular location is the cytoplasm. The enzyme catalyses AMP + ATP = 2 ADP. The protein operates within purine metabolism; AMP biosynthesis via salvage pathway; AMP from ADP: step 1/1. In terms of biological role, catalyzes the reversible transfer of the terminal phosphate group between ATP and AMP. Plays an important role in cellular energy homeostasis and in adenine nucleotide metabolism. This chain is Adenylate kinase, found in Campylobacter jejuni (strain RM1221).